The following is a 619-amino-acid chain: MESQLTRPYGHEQAEEPIRIHHPEEEEHHEKGASKVLKKVKEKAKKIKNSLTKHGNGHDHDVEDDDDEYDEQDPEVHGAPVYESSAVRGGVTGKPKSLSHAGETNVPASEEIVPPGTKVFPVVSSDHTKPIEPVSLQDTSYGHEALADPVRTTETSDWEAKREAPTHYPLGVSEFSDRGESREAHQEPLNTPVSLLSATEDVTRTFAPGGEDDYLGGQRKVNVETPKRLEEDPAAPGGGSDYLSGVSNYQSKVTDPTHKGGEAGVPEIAESLGRMKVTDESPDQKSRQGREEDFPTRSHEFDLKKESDINKNSPARFGGESKAGMEEDFPTRGDVKVESGLGRDLPTGTHDQFSPELSRPKERDDSEETKDESTHETKPSTYTEQLASATSAITNKAIAAKNVVASKLGYTGENGGGQSESPVKDETPRSVTAYGQKVAGTVAEKLTPVYEKVKETGSTVMTKLPLSGGGSGVKETQQGEEKGVTAKNYISEKLKPGEEDKALSEMIAEKLHFGGGGEKKTTATKEVEVTVEKIPSDQIAEGKGHGEAVAEEGKGGEGMVGKVKGAVTSWLGGKPKSPRSVEESPQSLGTTVGTMGFSDSGGSELGGSGGGKGVQDSGN.

Disordered stretches follow at residues 1–383 (MESQ…STYT) and 408–429 (LGYT…ETPR). The segment covering 9 to 33 (YGHEQAEEPIRIHHPEEEEHHEKGA) has biased composition (basic and acidic residues). Residues 36–48 (VLKKVKEKAKKIK) are compositionally biased toward basic residues. Acidic residues predominate over residues 62–73 (VEDDDDEYDEQD). Residues 175–186 (FSDRGESREAHQ) show a composition bias toward basic and acidic residues. Residues 188 to 197 (PLNTPVSLLS) are compositionally biased toward polar residues. The span at 221–231 (VNVETPKRLEE) shows a compositional bias: basic and acidic residues. The span at 245–254 (GVSNYQSKVT) shows a compositional bias: polar residues. 2 stretches are compositionally biased toward basic and acidic residues: residues 276 to 309 (KVTD…ESDI) and 323 to 337 (AGME…DVKV). Tandem repeats lie at residues 404-408 (VASKL), 442-446 (VAEKL), 460-464 (VMTKL), 490-494 (ISEKL), and 507-511 (IAEKL). Residues 404-511 (VASKLGYTGE…ALSEMIAEKL (108 aa)) are 5 X 5 AA repeats of [IV]-[AMS]-[EST]-K-L. The disordered stretch occupies residues 461 to 485 (MTKLPLSGGGSGVKETQQGEEKGVT). Ser536 bears the Phosphoserine mark. A compositionally biased stretch (basic and acidic residues) spans 537-555 (DQIAEGKGHGEAVAEEGKG). A disordered region spans residues 537-619 (DQIAEGKGHG…GGKGVQDSGN (83 aa)). Residues 583 to 593 (ESPQSLGTTVG) are compositionally biased toward polar residues. The span at 603-613 (SELGGSGGGKG) shows a compositional bias: gly residues.

The protein belongs to the LTI78/LTI65 family.

In Arabidopsis thaliana (Mouse-ear cress), this protein is Low-temperature-induced 65 kDa protein (LTI65).